The following is a 77-amino-acid chain: U8-lycotoxin-Ls1a (77 aa).

Residues 1–20 (MKLIIFTGLVLFAIVSLIEA) form the signal peptide. A propeptide spanning residues 21–26 (QAENEK) is cleaved from the precursor.

Belongs to the neurotoxin 19 (CSTX) family. 08 (U8-Lctx) subfamily. Post-translationally, contains 4 disulfide bonds. Expressed by the venom gland.

The protein resides in the secreted. The sequence is that of U8-lycotoxin-Ls1a from Lycosa singoriensis (Wolf spider).